Consider the following 163-residue polypeptide: Peptide deformylase (163 aa).

Residues Cys91 and His133 each contribute to the Fe cation site. Glu134 is an active-site residue. Residue His137 participates in Fe cation binding.

This sequence belongs to the polypeptide deformylase family. The cofactor is Fe(2+).

The catalysed reaction is N-terminal N-formyl-L-methionyl-[peptide] + H2O = N-terminal L-methionyl-[peptide] + formate. Functionally, removes the formyl group from the N-terminal Met of newly synthesized proteins. Requires at least a dipeptide for an efficient rate of reaction. N-terminal L-methionine is a prerequisite for activity but the enzyme has broad specificity at other positions. The polypeptide is Peptide deformylase (Lachnoclostridium phytofermentans (strain ATCC 700394 / DSM 18823 / ISDg) (Clostridium phytofermentans)).